The sequence spans 27 residues: Cysteine-rich venom protein tropirin (27 aa).

This sequence belongs to the CRISP family. Contains 8 disulfide bonds. Expressed by the venom gland.

The protein localises to the secreted. In terms of biological role, blocks contraction of smooth muscle elicited by high potassium-induced depolarization, but does not block caffeine-stimulated contraction. May target voltage-gated calcium channels on smooth muscle. This is Cysteine-rich venom protein tropirin from Tropidechis carinatus (Australian rough-scaled snake).